The primary structure comprises 1053 residues: MLDVNNFEYMKIGLASPDKIRSWSHGEVKKPETINYRTLKPERDGLFCERIFGPMKDWECSCGKYKRVRYKGVVCDRCGVEVTKSKVRRERMGHIELAAPVSHIWYFKGIPSRMGLVMDMSPRALEEIIYFASYVVTEPGDTPLEKKQLLSEKEYRVYREKYGKNFHAGMGAEAIKKILSDIDLEKETQELKAELQTAQGQRRTRAIRRLEVMEAFRNSGNEPSWMILDVLPVIPPEIRPMVQLEGGRFATSDLNDLYRRVINRNNRLKRLLDLGAPNIIVQNEKRMLQEAVDALIDNGRRGRPVTGPGNRPLKSLSHMLKGKQGRFRQNLLGKRVDYSGRSVIVVGPNLKMYQCGLPKEMALELFKPFIMKELVSRGLAHNIKSAKRKIERMAAEVWDVLEEVIREHPVLLNRAPTLHRLGIQAFEPTLVEGRAIRLHPLVCTAYNADFDGDQMAVHVPLSAEAQAEARLLMLAAQNILNPKDGKPVVTPSQDMVLGNYYLTLERENAVGEGLVFKDINEAMIAYTNGYVHLHSRIGVYAGSIQNERFTEEQRKQLLITTVGKLVFNTILPESFPYINEPTKYNLEIETPTKYFVDTTTDVKTHIANQPLIDPFKKGILGNIIAEVFKKFHITETSKMLDRMKDLGFKISTKAGITVGIADILTLQEKPEILEKAHDKVEKITKQFRRGLITGDERYERVIGVWNAAKDEIQNKLILSLERLNPIFMMQDSGARGNISNFTQLAGMRGLMADPSGRIVELPITSNFREGLTVLEYFISTHGARKGLTDTALKTADSGYLTRRLVDVAQDVIIREDDCGTDRGLTIKAIREGTEIIEPLEERLEGRYARKTIRHPETNEIIVKENDLITEDIAVQIIGAGIEEVSIRSAFTCNTKHGVCKKCYGKNLATGTEVEVGEAVGIIAAQSIGEPGTQLTMRTFHTGGVAGDDITQGLPRIQEIFEARNPKGQATITEVAGEVVSIEEGRDRGLEITIQGVDDRRSYTVPYTARLRVEVGSMLDRGEALTEGSIDPKALIRVRDVLSVQEYLLAEVQK.

Zn(2+)-binding residues include cysteine 60, cysteine 62, cysteine 75, and cysteine 78. Mg(2+)-binding residues include aspartate 449, aspartate 451, and aspartate 453. Zn(2+) is bound by residues cysteine 818, cysteine 892, cysteine 899, and cysteine 902.

It belongs to the RNA polymerase beta' chain family. The RNAP catalytic core consists of 2 alpha, 1 beta, 1 beta' and 1 omega subunit. When a sigma factor is associated with the core the holoenzyme is formed, which can initiate transcription. It depends on Mg(2+) as a cofactor. Requires Zn(2+) as cofactor.

It catalyses the reaction RNA(n) + a ribonucleoside 5'-triphosphate = RNA(n+1) + diphosphate. In terms of biological role, DNA-dependent RNA polymerase catalyzes the transcription of DNA into RNA using the four ribonucleoside triphosphates as substrates. In Listeria grayi (Listeria murrayi), this protein is DNA-directed RNA polymerase subunit beta'.